The sequence spans 80 residues: RNA-binding protein KhpA (80 aa).

The KH domain maps to 33–80 (LEILQLRVASEDVGKVIGKHGRIARALRTLLSASAHASQTRYALEIID).

Belongs to the KhpA RNA-binding protein family. As to quaternary structure, forms a complex with KhpB.

Its subcellular location is the cytoplasm. A probable RNA chaperone. Forms a complex with KhpB which binds to cellular RNA and controls its expression. Plays a role in peptidoglycan (PG) homeostasis and cell length regulation. The polypeptide is RNA-binding protein KhpA (Treponema pallidum (strain Nichols)).